The chain runs to 222 residues: Nucleoside triphosphate pyrophosphatase (222 aa).

D82 (proton acceptor) is an active-site residue.

This sequence belongs to the Maf family. The cofactor is a divalent metal cation.

It is found in the cytoplasm. It carries out the reaction a ribonucleoside 5'-triphosphate + H2O = a ribonucleoside 5'-phosphate + diphosphate + H(+). It catalyses the reaction a 2'-deoxyribonucleoside 5'-triphosphate + H2O = a 2'-deoxyribonucleoside 5'-phosphate + diphosphate + H(+). Functionally, nucleoside triphosphate pyrophosphatase. May have a dual role in cell division arrest and in preventing the incorporation of modified nucleotides into cellular nucleic acids. The chain is Nucleoside triphosphate pyrophosphatase from Mycobacterium tuberculosis (strain ATCC 25177 / H37Ra).